The sequence spans 101 residues: Integration host factor subunit beta (101 aa).

It belongs to the bacterial histone-like protein family. Heterodimer of an alpha and a beta chain.

In terms of biological role, this protein is one of the two subunits of integration host factor, a specific DNA-binding protein that functions in genetic recombination as well as in transcriptional and translational control. This Nitrobacter hamburgensis (strain DSM 10229 / NCIMB 13809 / X14) protein is Integration host factor subunit beta.